Reading from the N-terminus, the 400-residue chain is Endophilin-B2 (400 aa).

N-acetylmethionine is present on Met-1. The interval 1–27 (MDFNMKKLASDAGIFFTRAVQFTEEKF) is membrane-binding amphipathic helix. The residue at position 10 (Ser-10) is a Phosphoserine. One can recognise a BAR domain in the interval 24–287 (EEKFGQAEKT…LGSSQGAIFP (264 aa)). A coiled-coil region spans residues 205–234 (SASALWNDEVDKAEQELRVAQTEFDRQAEV). Residues 340–400 (SGTRKARVLY…VPVTYLELLS (61 aa)) enclose the SH3 domain. Ser-400 carries the phosphoserine modification.

This sequence belongs to the endophilin family. Homodimer, and heterodimer with SH3GLB1.

The protein resides in the cytoplasm. This chain is Endophilin-B2 (Sh3glb2), found in Mus musculus (Mouse).